We begin with the raw amino-acid sequence, 223 residues long: Ribose-5-phosphate isomerase A (223 aa).

Substrate-binding positions include 32-35 (TGST), 83-86 (DGAD), and 96-99 (KGGG). Glu-105 serves as the catalytic Proton acceptor. Lys-123 serves as a coordination point for substrate.

The protein belongs to the ribose 5-phosphate isomerase family. Homodimer.

The catalysed reaction is aldehydo-D-ribose 5-phosphate = D-ribulose 5-phosphate. The protein operates within carbohydrate degradation; pentose phosphate pathway; D-ribose 5-phosphate from D-ribulose 5-phosphate (non-oxidative stage): step 1/1. Its function is as follows. Catalyzes the reversible conversion of ribose-5-phosphate to ribulose 5-phosphate. The sequence is that of Ribose-5-phosphate isomerase A from Acinetobacter baumannii (strain ATCC 17978 / DSM 105126 / CIP 53.77 / LMG 1025 / NCDC KC755 / 5377).